Consider the following 120-residue polypeptide: Large ribosomal subunit protein eL8 (120 aa).

Belongs to the eukaryotic ribosomal protein eL8 family. As to quaternary structure, part of the 50S ribosomal subunit. Probably part of the RNase P complex.

The protein localises to the cytoplasm. Multifunctional RNA-binding protein that recognizes the K-turn motif in ribosomal RNA, the RNA component of RNase P, box H/ACA, box C/D and box C'/D' sRNAs. This chain is Large ribosomal subunit protein eL8, found in Halorubrum lacusprofundi (strain ATCC 49239 / DSM 5036 / JCM 8891 / ACAM 34).